The chain runs to 834 residues: ATP-dependent DNA helicase fml1 (834 aa).

The region spanning 80–248 is the Helicase ATP-binding domain; that stretch reads IVQKALFENV…NVIDSLHISR (169 aa). 93–100 provides a ligand contact to ATP; sequence LPTGLGKT. The DEAH box motif lies at 196 to 199; the sequence is DEAH. Positions 416 to 582 constitute a Helicase C-terminal domain; that stretch reads HLERIVTEYF…GLSLSEKSYR (167 aa). An interaction with MHF complex region spans residues 650 to 690; that stretch reads EESPFEICPVTYSIEQEKKLEKYKRVCLRGLDIHRNRRLSQ. Residues 738–769 are disordered; that stretch reads NSTDRDTKQPKMHDFRQPLHPNPMTTLKRKGQ. Residues 740–754 are compositionally biased toward basic and acidic residues; the sequence is TDRDTKQPKMHDFRQ.

Belongs to the DEAD box helicase family. DEAH subfamily. FANCM sub-subfamily.

Its subcellular location is the cytoplasm. It localises to the nucleus. It is found in the nucleolus. It carries out the reaction ATP + H2O = ADP + phosphate + H(+). Functionally, ATP-dependent DNA helicase involved in DNA damage repair by homologous recombination and in genome maintenance. Capable of unwinding D-loops. Plays a role in limiting crossover recombination during mitotic DNA double-strand break (DSB) repair. Component of a FANCM-MHF complex which promotes gene conversion at blocked replication forks, probably by reversal of the stalled fork. FANCM-MHF also promotes non-crossover recombination in meiotic cells. The sequence is that of ATP-dependent DNA helicase fml1 from Schizosaccharomyces pombe (strain 972 / ATCC 24843) (Fission yeast).